We begin with the raw amino-acid sequence, 176 residues long: Peptide methionine sulfoxide reductase MsrA (176 aa).

Cys12 is an active-site residue.

The protein belongs to the MsrA Met sulfoxide reductase family.

It catalyses the reaction L-methionyl-[protein] + [thioredoxin]-disulfide + H2O = L-methionyl-(S)-S-oxide-[protein] + [thioredoxin]-dithiol. The catalysed reaction is [thioredoxin]-disulfide + L-methionine + H2O = L-methionine (S)-S-oxide + [thioredoxin]-dithiol. Has an important function as a repair enzyme for proteins that have been inactivated by oxidation. Catalyzes the reversible oxidation-reduction of methionine sulfoxide in proteins to methionine. In Thermus thermophilus (strain ATCC BAA-163 / DSM 7039 / HB27), this protein is Peptide methionine sulfoxide reductase MsrA.